Reading from the N-terminus, the 487-residue chain is MKPSTEWWRYLAPLAVIAIIALIPVPAGLESHTWLYFAVFTGVIVGLILEPVPGAVVAMVGISIIAILSPWLLFSPEQLAQPGFKFTAKSLSWAVFGFSNSVIWLIFAAFMFGTGYEKTGLGRRIALILVKKMGHRTLFLGYAVMFSELILAPVTPSNSARGAGIIYPIIRNLPPLYQSQPNDSSSRSIGSYIMWMGIVADCVTSAIFLTAMAPNLLLIGLMKSASHATLSWGDWFLGMLPLSILLVLLVPWLAYVLYPPVLKSGDQVPRWAETELQAMGPLCSREKRMLGLMVGALVLWIFGGDYIDAAMVGYSVVALMLLLRIISWDDIVSNKAAWNVFFWLASLITLATGLNNTGFISWFGKLLAGSLSGYSPTMVMVALIVVFYLLRYFFASATAYTSALAPMMIAAALAMPEIPLPVFCLMVGAAIGLGSILTPYATGPSPIYYGSGYLPTADYWRLGAIFGLIFLVLLVITGLLWMPVVLL.

A run of 14 helical transmembrane segments spans residues 10–30, 33–53, 54–74, 93–113, 137–157, 189–209, 236–256, 292–312, 313–333, 340–360, 370–390, 393–413, 418–438, and 465–485; these read YLAPLAVIAIIALIPVPAGLE, TWLYFAVFTGVIVGLILEPVP, GAVVAMVGISIIAILSPWLLF, WAVFGFSNSVIWLIFAAFMFG, TLFLGYAVMFSELILAPVTPS, IGSYIMWMGIVADCVTSAIFL, FLGMLPLSILLVLLVPWLAYV, LMVGALVLWIFGGDYIDAAMV, GYSVVALMLLLRIISWDDIVS, VFFWLASLITLATGLNNTGFI, SLSGYSPTMVMVALIVVFYLL, FFASATAYTSALAPMMIAAAL, IPLPVFCLMVGAAIGLGSILT, and IFGLIFLVLLVITGLLWMPVV.

The protein belongs to the SLC13A/DASS transporter (TC 2.A.47) family. DIT1 subfamily.

Its subcellular location is the cell inner membrane. The enzyme catalyses (2R,3R)-tartrate(out) + succinate(in) = (2R,3R)-tartrate(in) + succinate(out). Catalyzes the uptake of tartrate in exchange for intracellular succinate. Essential for anaerobic L-tartrate fermentation. The protein is L-tartrate/succinate antiporter (ttdT) of Shigella boydii serotype 4 (strain Sb227).